The sequence spans 274 residues: Thiazole synthase (274 aa).

Residue K115 is the Schiff-base intermediate with DXP of the active site. 1-deoxy-D-xylulose 5-phosphate contacts are provided by residues G176, 202–203, and 224–225; these read AG and NS.

It belongs to the ThiG family. In terms of assembly, homotetramer. Forms heterodimers with either ThiH or ThiS.

It localises to the cytoplasm. The catalysed reaction is [ThiS sulfur-carrier protein]-C-terminal-Gly-aminoethanethioate + 2-iminoacetate + 1-deoxy-D-xylulose 5-phosphate = [ThiS sulfur-carrier protein]-C-terminal Gly-Gly + 2-[(2R,5Z)-2-carboxy-4-methylthiazol-5(2H)-ylidene]ethyl phosphate + 2 H2O + H(+). The protein operates within cofactor biosynthesis; thiamine diphosphate biosynthesis. Catalyzes the rearrangement of 1-deoxy-D-xylulose 5-phosphate (DXP) to produce the thiazole phosphate moiety of thiamine. Sulfur is provided by the thiocarboxylate moiety of the carrier protein ThiS. In vitro, sulfur can be provided by H(2)S. The sequence is that of Thiazole synthase from Parasynechococcus marenigrum (strain WH8102).